We begin with the raw amino-acid sequence, 2159 residues long: Calpain-type cysteine protease DEK1 (2159 aa).

The N-terminal stretch at 1 to 33 (MEGEGHHGVVLACSICGFLFAVLSPFSFWVLWA) is a signal peptide. Topologically, residues 34-70 (VNWRPWRLYSWIYARKWPTYVQGPQLSTLCSLLTLCA) are extracellular. A helical transmembrane segment spans residues 71-91 (WLVVISPIAVLLVWGSVLIAL). Residues 92 to 95 (MERN) are Cytoplasmic-facing. Residues 96–116 (IIGLAVIMAGVALLLSFYSIM) traverse the membrane as a helical segment. The Extracellular segment spans residues 117 to 127 (LWWRTQWQSSE). A helical transmembrane segment spans residues 128–148 (AVAYLLLLAVCLLCAYDFCAI). Residues 149–164 (YVTAGASASELNSPSG) lie on the Cytoplasmic side of the membrane. A helical transmembrane segment spans residues 165-185 (FFFGVSVISLAINMLFICKIL). Residues 186–236 (FNVSGFDVDEYVRRSYKFAYSDCVEVAPVSCSPEPPDPSELYMTKSSRVKH) lie on the Extracellular side of the membrane. Residues 237–257 (LGLLYISSLLVLVGYSILYGL) form a helical membrane-spanning segment. Residues 258-264 (TSKEARW) are Cytoplasmic-facing. The chain crosses the membrane as a helical span at residues 265-285 (LGALTSVAVVILDWNLGLCSF). Residues 286–294 (RFELLKSRM) lie on the Extracellular side of the membrane. Residues 295–315 (IVLFVAGTSRAFLVSFGVHYW) form a helical membrane-spanning segment. Over 316–320 (YLGHC) the chain is Cytoplasmic. The helical transmembrane segment at 321–341 (ISYAFVASVLLSAAVSSWLSI) threads the bilayer. The Extracellular segment spans residues 342-623 (SNPSVARIDA…LIFHHLAGSP (282 aa)). Residues 365 to 409 (RKGQNSSSNSSEGCGSSVKRSSGSVEAGQNGNAMDSMYRSNSQSD) form a disordered region. Low complexity predominate over residues 369-381 (NSSSNSSEGCGSS). A compositionally biased stretch (polar residues) spans 382–409 (VKRSSGSVEAGQNGNAMDSMYRSNSQSD). The chain crosses the membrane as a helical span at residues 624–644 (IRAFIVFTVMFIIETATVAIY). At 645 to 660 (RPETIKVINATHEQFE) the chain is on the cytoplasmic side. The chain crosses the membrane as a helical span at residues 661–681 (FGFSILLLSPVVCSIMAFIWS). Topologically, residues 682–694 (LRAEEMLMTSKPQ) are extracellular. The helical transmembrane segment at 695–715 (KYGFIAWLLSTCVGLFLSFLS) threads the bilayer. At 716-719 (KSSV) the chain is on the cytoplasmic side. Residues 720–740 (ILGLSLTVPLMVACLSFAVPI) form a helical membrane-spanning segment. The Extracellular portion of the chain corresponds to 741 to 770 (WIRNGYSFWIPGREFANRENVSQAPGEKER). Residues 771-791 (ALFVITIAVFTASIIGLGAIV) form a helical membrane-spanning segment. At 792 to 822 (SAKPLDALGYKGWDADKNSSYSPYATSMYLG) the chain is on the cytoplasmic side. Residues 823 to 843 (WALSSTIAVITTGLIPIVAWF) form a helical membrane-spanning segment. Residues 844-853 (ATYRFSPSSA) are Extracellular-facing. The helical transmembrane segment at 854 to 874 (ICVGLFATVLVSFCGASYWGV) threads the bilayer. The Cytoplasmic segment spans residues 875-887 (VNSREDGVPLKAD). The chain crosses the membrane as a helical span at residues 888-908 (FLAALLPLLCIPAFFSLFTGL). Topologically, residues 909 to 921 (YKWKDDDWKISRG) are extracellular. Residues 922-942 (VYLFVGMGMLLLFGAVAAVIV) form a helical membrane-spanning segment. The Cytoplasmic portion of the chain corresponds to 943–946 (TIRP). The chain crosses the membrane as a helical span at residues 947 to 967 (WTVGVACLVAILFLVFVIGVI). Residues 968-981 (HYWTSNNFYLTRTQ) lie on the Extracellular side of the membrane. A helical membrane pass occupies residues 982-1002 (MLLVCSIAFLLALAAFLMGLF). The Cytoplasmic portion of the chain corresponds to 1003–1016 (HGKPFVGASIGYFS). A helical transmembrane segment spans residues 1017–1037 (FIFLLTGRALTVLLSPPIVVY). Over 1038–1060 (SPRVLPVYVYDAHADSAKNVSYA) the chain is Extracellular. The chain crosses the membrane as a helical span at residues 1061 to 1081 (FLILYGIALATEVWGVIASLI). Residues 1082–2159 (MNPPFVGAGV…SKASIRLEAV (1078 aa)) lie on the Cytoplasmic side of the membrane. Phosphoserine is present on residues Ser-1371 and Ser-1376. A Calpain catalytic 1 domain is found at 1417–1609 (TGRHCGELDL…MSPAEYGFFD (193 aa)). Ser-1665 is subject to Phosphoserine. Residues 1703-2005 (NFTDQEFPPE…FRSIYVCRVY (303 aa)) enclose the Calpain catalytic 2 domain. Active-site residues include Cys-1769, His-1927, and Asn-1947.

Belongs to the peptidase C2 family. Post-translationally, autocatalytic proteolytic cleavage leading to the production of mainly cytoplasmic localized subproducts of about 85 and 120 kDa. Expressed in most tissues at low levels ranging from 30 to 55 ppm. Present in all endosperm cells at transcript level, but confined to aleurones at protein level.

The protein resides in the endoplasmic reticulum membrane. The protein localises to the cytoplasm. It localises to the cell membrane. Its subcellular location is the endosome membrane. Essential protease involved in epiderm development. Required for aleurone cell development in the endosperm probably by maintaining and restricting the aleurone and embryonic epidermal L1 cell-layer fates as well as meristems organization. Involved in the maintenance of adaxial/abaxial axis information in developing leaves, probably by regulating cell proliferation and expansion. Does not need calcium ions to be active. In Zea mays (Maize), this protein is Calpain-type cysteine protease DEK1 (DEK1).